A 100-amino-acid chain; its full sequence is Nucleoid-associated protein ckrop_0143 (100 aa).

The protein belongs to the YbaB/EbfC family. As to quaternary structure, homodimer.

The protein localises to the cytoplasm. Its subcellular location is the nucleoid. Binds to DNA and alters its conformation. May be involved in regulation of gene expression, nucleoid organization and DNA protection. This is Nucleoid-associated protein ckrop_0143 from Corynebacterium kroppenstedtii (strain DSM 44385 / JCM 11950 / CIP 105744 / CCUG 35717).